The chain runs to 146 residues: UPF0260 protein Sden_1632 (146 aa).

It belongs to the UPF0260 family.

The polypeptide is UPF0260 protein Sden_1632 (Shewanella denitrificans (strain OS217 / ATCC BAA-1090 / DSM 15013)).